A 473-amino-acid chain; its full sequence is Psoralen synthase (473 aa).

Residues tyrosine 1–valine 17 traverse the membrane as a helical segment. Positions threonine 350–valine 355 are substrate specificity. Position 425 (cysteine 425) interacts with heme.

The protein belongs to the cytochrome P450 family. It depends on heme as a cofactor.

The protein resides in the microsome membrane. It carries out the reaction (7S)-marmesin + reduced [NADPH--hemoprotein reductase] + O2 = psoralen + acetone + oxidized [NADPH--hemoprotein reductase] + 2 H2O + H(+). The protein operates within secondary metabolite biosynthesis. Functionally, involved in the biosynthesis of coumarins and furanocoumarins (FCs), natural products required for defense responses against attacks by predators with potential medical and agroindustrial usages such as anticoagulant, rodenticide and artificial vanilla substitutes. Involved in linear furanocumarin (psoralen) biosynthesis. Converts marmesin to psoralen and, with much lower affinity, 5-hydroxymarmesin to bergaptol. In Pastinaca sativa (Wild parsnip), this protein is Psoralen synthase.